The primary structure comprises 517 residues: Maturase K (517 aa).

This sequence belongs to the intron maturase 2 family. MatK subfamily.

The protein localises to the plastid. Its subcellular location is the chloroplast. Usually encoded in the trnK tRNA gene intron. Probably assists in splicing its own and other chloroplast group II introns. This is Maturase K from Dracula chimaera.